The chain runs to 338 residues: Ketol-acid reductoisomerase (NADP(+)) (338 aa).

The KARI N-terminal Rossmann domain occupies 1 to 181; it reads MKVFYDKDCD…GGGRTGIIET (181 aa). Residues 24–27, Arg47, Ser50, Thr52, and 82–85 each bind NADP(+); these read YGSQ and DEFQ. Residue His107 is part of the active site. Gly133 contributes to the NADP(+) binding site. The region spanning 182–327 is the KARI C-terminal knotted domain; sequence TFKDETETDL…EQLRSMMPWI (146 aa). Mg(2+)-binding residues include Asp190, Glu194, Glu226, and Glu230. Position 251 (Ser251) interacts with substrate.

It belongs to the ketol-acid reductoisomerase family. Mg(2+) is required as a cofactor.

It carries out the reaction (2R)-2,3-dihydroxy-3-methylbutanoate + NADP(+) = (2S)-2-acetolactate + NADPH + H(+). The enzyme catalyses (2R,3R)-2,3-dihydroxy-3-methylpentanoate + NADP(+) = (S)-2-ethyl-2-hydroxy-3-oxobutanoate + NADPH + H(+). It participates in amino-acid biosynthesis; L-isoleucine biosynthesis; L-isoleucine from 2-oxobutanoate: step 2/4. Its pathway is amino-acid biosynthesis; L-valine biosynthesis; L-valine from pyruvate: step 2/4. Involved in the biosynthesis of branched-chain amino acids (BCAA). Catalyzes an alkyl-migration followed by a ketol-acid reduction of (S)-2-acetolactate (S2AL) to yield (R)-2,3-dihydroxy-isovalerate. In the isomerase reaction, S2AL is rearranged via a Mg-dependent methyl migration to produce 3-hydroxy-3-methyl-2-ketobutyrate (HMKB). In the reductase reaction, this 2-ketoacid undergoes a metal-dependent reduction by NADPH to yield (R)-2,3-dihydroxy-isovalerate. In Pseudomonas putida (strain ATCC 700007 / DSM 6899 / JCM 31910 / BCRC 17059 / LMG 24140 / F1), this protein is Ketol-acid reductoisomerase (NADP(+)).